The chain runs to 561 residues: 3-hydroxy-3-methylglutaryl-coenzyme A reductase 3 (561 aa).

2 consecutive transmembrane segments (helical) span residues 25–45 (PIRH…AYLM) and 69–89 (IFGL…AFVQ). Residues 90–145 (SIVSSSDDEEEDFLVGPARGSSAAAAVAPPPPPSSPAQCSLLGSPHDDAARERMPE) form a linker region. Residues 113-146 (AAAVAPPPPPSSPAQCSLLGSPHDDAARERMPEE) are disordered. The span at 134–143 (PHDDAARERM) shows a compositional bias: basic and acidic residues. Residues 146–561 (EDEEIVSSVV…SSKDMSKVIS (416 aa)) form a catalytic region. The active-site Charge relay system is Glu-240. N-linked (GlcNAc...) asparagine glycosylation occurs at Asn-304. Catalysis depends on charge relay system residues Lys-372 and Asp-448. Residue His-546 is the Proton donor of the active site. N-linked (GlcNAc...) asparagine glycosylation occurs at Asn-550.

It belongs to the HMG-CoA reductase family.

Its subcellular location is the endoplasmic reticulum membrane. The enzyme catalyses (R)-mevalonate + 2 NADP(+) + CoA = (3S)-3-hydroxy-3-methylglutaryl-CoA + 2 NADPH + 2 H(+). Its pathway is metabolic intermediate biosynthesis; (R)-mevalonate biosynthesis; (R)-mevalonate from acetyl-CoA: step 3/3. Its function is as follows. Catalyzes the synthesis of mevalonate. The specific precursor of all isoprenoid compounds present in plants. The sequence is that of 3-hydroxy-3-methylglutaryl-coenzyme A reductase 3 (HMG3) from Oryza sativa subsp. japonica (Rice).